The chain runs to 66 residues: Beta-defensin 107A (66 aa).

Positions M1 to T22 are cleaved as a signal peptide. Cystine bridges form between C37–C51 and C41–C60.

This sequence belongs to the beta-defensin family.

The protein localises to the secreted. Has antibacterial activity. The chain is Beta-defensin 107A (DEFB107A) from Hylobates lar (Lar gibbon).